We begin with the raw amino-acid sequence, 939 residues long: Isoleucine--tRNA ligase (939 aa).

Residues 57–67 (PYANGHIHLGH) carry the 'HIGH' region motif. L-isoleucyl-5'-AMP is bound at residue Glu561. The short motif at 602–606 (KMSKS) is the 'KMSKS' region element. Residue Lys605 participates in ATP binding. 4 residues coordinate Zn(2+): Cys903, Cys906, Cys923, and Cys926.

The protein belongs to the class-I aminoacyl-tRNA synthetase family. IleS type 1 subfamily. In terms of assembly, monomer. The cofactor is Zn(2+).

The protein localises to the cytoplasm. It carries out the reaction tRNA(Ile) + L-isoleucine + ATP = L-isoleucyl-tRNA(Ile) + AMP + diphosphate. Functionally, catalyzes the attachment of isoleucine to tRNA(Ile). As IleRS can inadvertently accommodate and process structurally similar amino acids such as valine, to avoid such errors it has two additional distinct tRNA(Ile)-dependent editing activities. One activity is designated as 'pretransfer' editing and involves the hydrolysis of activated Val-AMP. The other activity is designated 'posttransfer' editing and involves deacylation of mischarged Val-tRNA(Ile). This chain is Isoleucine--tRNA ligase, found in Desulfotalea psychrophila (strain LSv54 / DSM 12343).